A 637-amino-acid chain; its full sequence is Chloride intracellular channel protein 6 (637 aa).

The segment at 1–400 (MAETAEPEGG…EASEEGDPGQ (400 aa)) is disordered. Low complexity predominate over residues 35 to 63 (GPEASEGAAKAPSGEGAGAAAKAGATEEA). Ser-39 carries the phosphoserine modification. The span at 126-137 (CELRGEAAREAE) shows a compositional bias: basic and acidic residues. Residues 138 to 152 (GQAAAPAAPGAQEEA) are compositionally biased toward low complexity. Tandem repeats lie at residues 155–160 (GDSVDA), 161–166 (EGSIDA), 167–172 (GGSVDA), 173–178 (AGSVDA), 179–184 (GGSIDA), 185–190 (GGSMDA), 191–196 (GGSVDA), 197–202 (GGSIDT), 203–208 (GGSVDA), 209–214 (AGSVDA), 215–220 (GGSIDT), 221–226 (GRNVDA), 227–232 (GGSIDA), 233–238 (GGSVDA), and 239–244 (GGSMDA). The 15 X 6 AA tandem repeat of [GEA]-[DGR]-[SN]-[VIM]-D-[AT] stretch occupies residues 155–244 (GDSVDAEGSI…SVDAGGSMDA (90 aa)). Positions 247–256 (PAGGAHGAGG) are enriched in gly residues. A compositionally biased stretch (acidic residues) spans 305-314 (GSEDAAGEDG). The segment covering 315–332 (DQGRPQEETEQQAERQEP) has biased composition (basic and acidic residues). Residues Ser-348 and Ser-393 each carry the phosphoserine modification. Positions 420 to 423 (CPFS) match the G-site motif. The helical transmembrane segment at 422 to 442 (FSQRLFMILWLKGVIFNVTTV) threads the bilayer. In terms of domain architecture, GST C-terminal spans 466 to 637 (DGDVKTDVNK…AYSDVAKRMK (172 aa)).

It belongs to the chloride channel CLIC family. In terms of assembly, monomer (soluble state). Interacts with dopamine receptors DRD2, DRD3 and DRD4. In terms of processing, phosphorylated. Expressed in brain, chorioretinal, lacrimal glands, submandibular glands, airway epithelium, kidney and gastric mucosa, where it is preferentially expressed in cells that secrete or transport water. In brain, it is highly expressed in choroid plexus. Not detected in pancreas, adrenal glands, heart, skeletal muscle, ileal mucosa, liver and lung.

The protein localises to the cytoplasm. Its subcellular location is the cell membrane. It carries out the reaction chloride(in) = chloride(out). With respect to regulation, channel activity is redox- and pH-regulated. Inhibited by IAA-94. In the soluble state, catalyzes glutaredoxin-like thiol disulfide exchange reactions with reduced glutathione as electron donor. Can insert into membranes and form voltage-dependent chloride-selective channels. The channel opens upon membrane depolarization at positive voltages and closes at negative membrane voltages. May play a critical role in water-secreting cells, possibly through the regulation of chloride ion transport. This Oryctolagus cuniculus (Rabbit) protein is Chloride intracellular channel protein 6 (CLIC6).